A 492-amino-acid chain; its full sequence is N-succinylglutamate 5-semialdehyde dehydrogenase (492 aa).

220–225 contributes to the NAD(+) binding site; it reads GSSTTG. Active-site residues include glutamate 243 and cysteine 277.

The protein belongs to the aldehyde dehydrogenase family. AstD subfamily.

It catalyses the reaction N-succinyl-L-glutamate 5-semialdehyde + NAD(+) + H2O = N-succinyl-L-glutamate + NADH + 2 H(+). Its pathway is amino-acid degradation; L-arginine degradation via AST pathway; L-glutamate and succinate from L-arginine: step 4/5. Functionally, catalyzes the NAD-dependent reduction of succinylglutamate semialdehyde into succinylglutamate. This chain is N-succinylglutamate 5-semialdehyde dehydrogenase, found in Klebsiella pneumoniae subsp. pneumoniae (strain ATCC 700721 / MGH 78578).